The following is a 92-amino-acid chain: DNA-binding protein HU 1 (92 aa).

Threonine 4 carries the phosphothreonine modification.

The protein belongs to the bacterial histone-like protein family. As to quaternary structure, homodimer. (Microbial infection) Interacts with Bacillus phage SP01 Gp46; the interaction replaces dsDNA from the hbs-DNA complex.

It is found in the cytoplasm. Its subcellular location is the nucleoid. In terms of biological role, histone-like DNA-binding protein which introduces negative supercoils in relaxed plasmid DNA in the presence of topoisomerase I. There are at least 20,000 monomers/cell. Capable of wrapping DNA to stabilize it, and thus to prevent its denaturation under extreme environmental conditions. Binds evenly across chromosome, does not display a preference for AT content. Binds ss- and dsDNA in a sequence non-specific manner; 8 nucleotides are sufficient to bind protein. The sequence is that of DNA-binding protein HU 1 from Bacillus subtilis (strain 168).